The following is a 204-amino-acid chain: High frequency lysogenization protein HflD homolog (204 aa).

Belongs to the HflD family.

It is found in the cytoplasm. The protein localises to the cell inner membrane. The sequence is that of High frequency lysogenization protein HflD homolog from Xylella fastidiosa (strain M23).